The primary structure comprises 221 residues: Cysteine-rich venom protein (221 aa).

Residue Gly-1 is a signal peptide. In terms of domain architecture, SCP spans 21 to 148 (DLHNSLRRSV…EYKYFYVCQY (128 aa)). Cystine bridges form between Cys-57-Cys-135, Cys-74-Cys-149, Cys-130-Cys-146, Cys-168-Cys-175, Cys-171-Cys-180, Cys-184-Cys-216, Cys-193-Cys-210, and Cys-201-Cys-214. In terms of domain architecture, ShKT spans 184–216 (CTHEDKFTNCKDLVKQGCNNNYLKTNCPASCSC).

Belongs to the CRISP family. Expressed by the venom gland.

Its subcellular location is the secreted. Blocks contraction of smooth muscle elicited by high potassium-induced depolarization, but does not block caffeine-stimulated contraction. May target voltage-gated calcium channels in smooth muscle. The sequence is that of Cysteine-rich venom protein from Vipera nikolskii (Nikolsky's adder).